The chain runs to 372 residues: Neutral protease 2 homolog MGYG_06241 (372 aa).

The first 19 residues, 1-19, serve as a signal peptide directing secretion; it reads MQFFTAIAAISALVAPALA. Positions 20-188 are excised as a propeptide; the sequence is LPTQELPQAP…THFAGTLNRR (169 aa). Disulfide bonds link Cys-195/Cys-264 and Cys-271/Cys-289. His-313 lines the Zn(2+) pocket. Residue Glu-314 is part of the active site. Zn(2+) contacts are provided by His-317 and Asp-328.

This sequence belongs to the peptidase M35 family. The cofactor is Zn(2+).

The protein resides in the secreted. The catalysed reaction is Preferential cleavage of bonds with hydrophobic residues in P1'. Also 3-Asn-|-Gln-4 and 8-Gly-|-Ser-9 bonds in insulin B chain.. Secreted metalloproteinase that allows assimilation of proteinaceous substrates. Shows high activities on basic nuclear substrates such as histone and protamine. May be involved in virulence. In Arthroderma gypseum (strain ATCC MYA-4604 / CBS 118893) (Microsporum gypseum), this protein is Neutral protease 2 homolog MGYG_06241.